An 878-amino-acid polypeptide reads, in one-letter code: DNA mismatch repair protein MutS (878 aa).

629–636 (GPNMAGKS) serves as a coordination point for ATP.

Belongs to the DNA mismatch repair MutS family.

In terms of biological role, this protein is involved in the repair of mismatches in DNA. It is possible that it carries out the mismatch recognition step. This protein has a weak ATPase activity. The protein is DNA mismatch repair protein MutS of Roseobacter denitrificans (strain ATCC 33942 / OCh 114) (Erythrobacter sp. (strain OCh 114)).